The following is a 176-amino-acid chain: Calponin-1 (176 aa).

The region spanning 22–125 (PQTERQLRVW…STLIALASQA (104 aa)) is the Calponin-homology (CH) domain. The stretch at 158–176 (IGLQMGTNKFASQQGMTAY) is one Calponin-like repeat. A Phosphothreonine; by ROCK2 modification is found at Thr164. Ser169 carries the post-translational modification Phosphoserine; by ROCK2. Phosphothreonine; by ROCK2 is present on Thr174.

The protein belongs to the calponin family. As to expression, smooth muscle, and tissues containing significant amounts of smooth muscle.

Functionally, thin filament-associated protein that is implicated in the regulation and modulation of smooth muscle contraction. It is capable of binding to actin, calmodulin and tropomyosin. The interaction of calponin with actin inhibits the actomyosin Mg-ATPase activity. The chain is Calponin-1 (CNN1) from Meleagris gallopavo (Wild turkey).